The primary structure comprises 438 residues: Aminopeptidase E (438 aa).

Catalysis depends on residues Cys70, His362, and Asn383.

The protein belongs to the peptidase C1 family.

The protein resides in the cytoplasm. Functionally, can hydrolyze internal peptide bonds in Met-enkephalin and bradykinin; however, hydrolysis of alpha-, beta-, and kappa-caseins is not detected. In Lactobacillus helveticus (Lactobacillus suntoryeus), this protein is Aminopeptidase E (pepE).